A 702-amino-acid chain; its full sequence is Phosphatase and actin regulator 4 (702 aa).

3 disordered regions span residues 1–37 (MEDP…KSKF), 72–194 (RKPR…SSGG), and 222–363 (NLSV…PFPA). One copy of the RPEL 1 repeat lies at 63–88 (EVLERKISMRKPREELVKRGVLLEDP). The span at 72–84 (RKPREELVKRGVL) shows a compositional bias: basic and acidic residues. Polar residues predominate over residues 106–120 (GHTTPIGNARSSSPV). Phosphoserine occurs at positions 116, 118, 131, and 147. Over residues 147-156 (STGSQPNSEA) the composition is skewed to polar residues. Positions 163-173 (VPKPPLLPPKR) are enriched in pro residues. The span at 233–250 (TLPAAPASTNTTATPSLT) shows a compositional bias: low complexity. 2 positions are modified to phosphoserine: serine 270 and serine 291. Residues 301 to 318 (PSTSVPTLESAAAITTKT) show a composition bias toward polar residues. Phosphoserine is present on residues serine 342 and serine 344. The span at 342 to 362 (SPSPPLPTHIPPEPPRTPPFP) shows a compositional bias: pro residues. Residue threonine 358 is modified to Phosphothreonine. Serine 427 is modified (phosphoserine). A Phosphothreonine modification is found at threonine 432. Serine 443, serine 453, and serine 464 each carry phosphoserine. A disordered region spans residues 469–536 (IEMLKVPDDE…EEDEDESYQS (68 aa)). The segment covering 484–497 (TCPSTFSEEMTPTS) has biased composition (polar residues). Residues 508–518 (EEEEKESDSDS) are compositionally biased toward acidic residues. Serine 514, serine 516, serine 557, and serine 590 each carry phosphoserine. RPEL repeat units lie at residues 583–608 (NTLI…QPKN) and 621–646 (RRLT…RFNE). A disordered region spans residues 592 to 615 (RPTPEELEQRNILQPKNEADRQAE). At serine 628 the chain carries Phosphoserine.

The protein belongs to the phosphatase and actin regulator family. In terms of assembly, binds PPP1CA and actin.

The protein localises to the cytoplasm. It localises to the cell projection. It is found in the lamellipodium. In terms of biological role, regulator of protein phosphatase 1 (PP1) required for neural tube and optic fissure closure, and enteric neural crest cell (ENCCs) migration during development. Acts as an activator of PP1 by interacting with PPP1CA and preventing phosphorylation of PPP1CA at 'Thr-320'. During neural tube closure, localizes to the ventral neural tube and activates PP1, leading to down-regulate cell proliferation within cranial neural tissue and the neural retina. Also acts as a regulator of migration of enteric neural crest cells (ENCCs) by activating PP1, leading to dephosphorylation and subsequent activation of cofilin (COF1 or COF2) and repression of the integrin signaling through the RHO/ROCK pathway. In Homo sapiens (Human), this protein is Phosphatase and actin regulator 4 (PHACTR4).